A 345-amino-acid polypeptide reads, in one-letter code: Isocitrate/homoisocitrate dehydrogenase (345 aa).

69–71 (TTT) contacts NADH. (2R,3S)-homoisocitrate contacts are provided by arginine 86, arginine 96, arginine 111, tyrosine 118, lysine 163, and asparagine 165. Asparagine 165 provides a ligand contact to NADH. Residues aspartate 194, aspartate 218, and aspartate 222 each contribute to the Mg(2+) site. NADH is bound by residues 251-255 (GSAPD) and asparagine 263.

Belongs to the isocitrate and isopropylmalate dehydrogenases family. The cofactor is Mn(2+). Requires Mg(2+) as cofactor.

The enzyme catalyses D-threo-isocitrate + NAD(+) = 2-oxoglutarate + CO2 + NADH. It carries out the reaction (2R,3S)-homoisocitrate + NAD(+) = 2-oxoadipate + CO2 + NADH. The protein operates within amino-acid biosynthesis; L-lysine biosynthesis via AAA pathway; L-alpha-aminoadipate from 2-oxoglutarate: step 4/5. Catalyzes the NAD(+)-dependent oxidative decarboxylation of homoisocitrate to 2-oxoadipate (alpha-ketoadipate), and of isocitrate to 2-oxoglutarate, at near equal efficiency. May thus play a dual role in glutamate and lysine biosynthesis in vivo. Preferentially uses NAD over NADP. In Pyrococcus horikoshii (strain ATCC 700860 / DSM 12428 / JCM 9974 / NBRC 100139 / OT-3), this protein is Isocitrate/homoisocitrate dehydrogenase.